The primary structure comprises 339 residues: MTDRSPFETDMLTLTRYVMEKGRQAKGTGELTQLLNSMLTAIKAISSAVRKAGLANLYGISGSVNVTGDEVKKLDVLSNSLVINMLQSSYSTCVLVSEENKEAVITAQERRGKYVVCFDPLDGSSNIDCLASIGTIFAIYRKTTEDEPSEKDALQPGRNIVAAGYALYGSATLVALSTGQGVDLFMLDPALGEFVLVEKDVRIKKKGKIFSLNEGYAKYFDAATAEYVQKKKFPEDGSEPYGARYVGSMVADVHRTLVYGGIFMYPANQKSPNGKLRLLYECNPVAYIIEQAGGMATTGTQPVLDVKPESIHQRVPLILGSPEDVQEYLSCVQRNQAGR.

Positions 3 to 10 (DRSPFETD) are important for interaction with ALDOA. AMP-binding positions include Val-18 and 28 to 32 (TGELT). Residues Asp-69 and Glu-98 each contribute to the Mg(2+) site. 113–114 (KY) is an AMP binding site. The Mg(2+) site is built by Asp-119, Leu-121, and Asp-122. Asp-122 is a substrate binding site. Arg-141 is a binding site for AMP. The Nuclear localization signal motif lies at 204–208 (KKKGK). 213–216 (NEGY) serves as a coordination point for substrate. Residues Tyr-216 and Tyr-219 each carry the phosphotyrosine modification. Substrate-binding positions include 245–249 (YVGSM), Tyr-265, and Lys-275. Glu-281 contributes to the Mg(2+) binding site.

The protein belongs to the FBPase class 1 family. Homotetramer. Interacts with ALDOA; the interaction blocks inhibition by physiological concentrations of AMP and reduces inhibition by Ca(2+). Interacts with alpha-actinin and F-actin. Requires Mg(2+) as cofactor. Expressed in muscle, intestine, brain and placenta and very weakly in liver.

It localises to the cell junction. It is found in the cytoplasm. Its subcellular location is the nucleus. The protein localises to the myofibril. The protein resides in the sarcomere. It localises to the z line. The enzyme catalyses beta-D-fructose 1,6-bisphosphate + H2O = beta-D-fructose 6-phosphate + phosphate. Its pathway is carbohydrate biosynthesis; gluconeogenesis. Its activity is regulated as follows. Subject to complex allosteric regulation. The enzyme can assume an active R-state, or an inactive T-state. Intermediate conformations may exist. AMP acts as an allosteric inhibitor. Fructose 2,6-bisphosphate acts as a competitive inhibitor. Strongly inhibited by Ca(2+). In terms of biological role, catalyzes the hydrolysis of fructose 1,6-bisphosphate to fructose 6-phosphate in the presence of divalent cations and probably participates in glycogen synthesis from carbohydrate precursors, such as lactate. In Mus musculus (Mouse), this protein is Fructose-1,6-bisphosphatase isozyme 2 (Fbp2).